A 668-amino-acid polypeptide reads, in one-letter code: Biotin biosynthesis bifunctional protein BioWF (668 aa).

Arg-293 provides a ligand contact to substrate. A pyridoxal 5'-phosphate-binding site is contributed by 380–381 (GY). His-405 provides a ligand contact to substrate. Pyridoxal 5'-phosphate contacts are provided by residues Ser-451, 476–479 (DDAH), and 507–510 (TASK). An N6-(pyridoxal phosphate)lysine modification is found at Lys-510.

The protein in the N-terminal section; belongs to the BioW family. This sequence in the C-terminal section; belongs to the class-II pyridoxal-phosphate-dependent aminotransferase family. BioF subfamily. In terms of assembly, homodimer. Mg(2+) serves as cofactor. The cofactor is pyridoxal 5'-phosphate.

The catalysed reaction is heptanedioate + ATP + CoA = 6-carboxyhexanoyl-CoA + AMP + diphosphate. It catalyses the reaction 6-carboxyhexanoyl-[ACP] + L-alanine + H(+) = (8S)-8-amino-7-oxononanoate + holo-[ACP] + CO2. It participates in metabolic intermediate metabolism; pimeloyl-CoA biosynthesis; pimeloyl-CoA from pimelate: step 1/1. Its pathway is cofactor biosynthesis; biotin biosynthesis. Its function is as follows. Catalyzes both the decarboxylative condensation of pimeloyl-[acyl-carrier protein] and L-alanine to produce 8-amino-7-oxononanoate (AON), [acyl-carrier protein], and carbon dioxide, and the transformation of pimelate into pimeloyl-CoA with concomitant hydrolysis of ATP to AMP. The sequence is that of Biotin biosynthesis bifunctional protein BioWF from Cutibacterium acnes (strain SK137) (Propionibacterium acnes).